Consider the following 289-residue polypeptide: Inorganic pyrophosphatase (289 aa).

Position 2 is an N-acetylserine (serine 2). Lysine 57 carries the post-translational modification N6-acetyllysine. The Mg(2+) site is built by aspartate 116, aspartate 121, and aspartate 153. Lysine 228 is subject to N6-acetyllysine. The residue at position 250 (serine 250) is a Phosphoserine.

The protein belongs to the PPase family. Homodimer. It depends on Mg(2+) as a cofactor.

It is found in the cytoplasm. It catalyses the reaction diphosphate + H2O = 2 phosphate + H(+). The protein is Inorganic pyrophosphatase (Ppa1) of Mus musculus (Mouse).